The chain runs to 329 residues: MAALKMTISCFLFLQVIYCLLSSFAPTNVQGLKVGFYDKACPKAELIVKKSVFEAVKNDRTIAAPLLRMFFHDCFVRGCEGSVLLELKNKKDEKNSIPNLTLRGFEIIDNVKAALEKECPGIVSCSDVLALVARDAMVALNGPSWEVETGRRDGLVTNITEALLNLPSPFNNISSLITQFQSKGLDKKDLVVLSGGHTIGNGHCPQITNRLYNFTGKGDSDPNLDTEYAVKLRGKCKPTDTTTALEMDPGSFKTFDESYFKLVSQRRGLFQSDAALLDNQETKSYVLKSLNSDGSTFFKDFGVSMVKMGRIGVLTGQVGEVRKKCRMVN.

Positions 1 to 31 (MAALKMTISCFLFLQVIYCLLSSFAPTNVQG) are cleaved as a signal peptide. 4 disulfides stabilise this stretch: Cys41-Cys119, Cys74-Cys79, Cys125-Cys325, and Cys204-Cys236. The active-site Proton acceptor is the His72. Asp73, Val76, Gly78, Glu80, and Ser82 together coordinate Ca(2+). Asn158 carries an N-linked (GlcNAc...) asparagine glycan. Pro167 is a substrate binding site. A glycan (N-linked (GlcNAc...) asparagine) is linked at Asn172. His197 contributes to the heme b binding site. Thr198 contributes to the Ca(2+) binding site. An N-linked (GlcNAc...) asparagine glycan is attached at Asn213. Residues Asp248, Ser251, and Asp256 each coordinate Ca(2+).

The protein belongs to the peroxidase family. Classical plant (class III) peroxidase subfamily. The cofactor is heme b. Ca(2+) serves as cofactor.

It is found in the secreted. It carries out the reaction 2 a phenolic donor + H2O2 = 2 a phenolic radical donor + 2 H2O. Removal of H(2)O(2), oxidation of toxic reductants, biosynthesis and degradation of lignin, suberization, auxin catabolism, response to environmental stresses such as wounding, pathogen attack and oxidative stress. These functions might be dependent on each isozyme/isoform in each plant tissue. The protein is Peroxidase 56 (PER56) of Arabidopsis thaliana (Mouse-ear cress).